Here is a 1004-residue protein sequence, read N- to C-terminus: Kinesin-like protein KIN-7I (1004 aa).

One can recognise a Kinesin motor domain in the interval 6-326 (KILVSVRVRP…LLFATCAKEV (321 aa)). 89–96 (GQTSSGKT) lines the ATP pocket. 3 coiled-coil regions span residues 335–402 (VVSE…AQSR), 517–576 (KKEY…QKQS), and 634–661 (SVEKEDTKKNLSSKKEDLKQNLSMDQSE). 3 disordered regions span residues 567-599 (EQSVEKQKQSPKKEEMEQYLSRDMSEQVTKSLP), 628-671 (SQQT…PEDE), and 802-830 (TMQHHSTHSDDTDTKTMKPENTDDGGEKT). Basic and acidic residues-rich tracts occupy residues 569-582 (SVEKQKQSPKKEEM) and 634-652 (SVEKEDTKKNLSSKKEDLK). The span at 653 to 663 (QNLSMDQSEQL) shows a compositional bias: polar residues. Lys-881 is covalently cross-linked (Glycyl lysine isopeptide (Lys-Gly) (interchain with G-Cter in ubiquitin)).

This sequence belongs to the TRAFAC class myosin-kinesin ATPase superfamily. Kinesin family. KIN-7 subfamily.

The polypeptide is Kinesin-like protein KIN-7I (Arabidopsis thaliana (Mouse-ear cress)).